Reading from the N-terminus, the 102-residue chain is Acid shock protein (102 aa).

The first 21 residues, 1–21 (MKKVLALVVAAAMGLSSAAFA), serve as a signal peptide directing secretion. A compositionally biased stretch (low complexity) spans 22–41 (AETATTPAPTATTTKAAPAK). The propeptide occupies 22–58 (AETATTPAPTATTTKAAPAKTTHHKKQHKAAPAQKAQ). The disordered stretch occupies residues 22-102 (AETATTPAPT…PAKPAAQPAA (81 aa)). A compositionally biased stretch (basic residues) spans 80 to 90 (AAKKHAKKHSH). Low complexity predominate over residues 91–102 (QQPAKPAAQPAA).

Belongs to the Asr family. In terms of processing, proteolytic processing gives rise to the active protein.

Its subcellular location is the periplasm. Functionally, required for growth and/or survival at acidic conditions. The protein is Acid shock protein of Escherichia coli O17:K52:H18 (strain UMN026 / ExPEC).